A 139-amino-acid chain; its full sequence is Holo-[acyl-carrier-protein] synthase (139 aa).

Asp8 and Glu61 together coordinate Mg(2+).

Belongs to the P-Pant transferase superfamily. AcpS family. Requires Mg(2+) as cofactor.

The protein localises to the cytoplasm. It catalyses the reaction apo-[ACP] + CoA = holo-[ACP] + adenosine 3',5'-bisphosphate + H(+). Functionally, transfers the 4'-phosphopantetheine moiety from coenzyme A to a Ser of acyl-carrier-protein. The sequence is that of Holo-[acyl-carrier-protein] synthase from Nitrobacter hamburgensis (strain DSM 10229 / NCIMB 13809 / X14).